The sequence spans 982 residues: Serine/threonine-protein kinase SULU (982 aa).

Positions 30–289 constitute a Protein kinase domain; sequence YQDLREIGHG…AEECFRHPFI (260 aa). ATP-binding positions include 36 to 44 and lysine 59; that span reads IGHGSFGAV. The Proton acceptor role is filled by aspartate 153. Disordered regions lie at residues 331-484, 592-620, 751-789, and 957-982; these read GKEG…PLDT, QNNE…QNQQ, LETQ…RDLK, and RTGS…QMAM. Residues 353 to 373 are compositionally biased toward low complexity; sequence SIGRAGDSASSRSASLTSFRS. Positions 421 to 431 are enriched in polar residues; it reads QMLSSTSTSGV. Residues 459–472 are compositionally biased toward low complexity; that stretch reads IPTSQPTSKSESSS. Residues 595–608 are compositionally biased toward basic and acidic residues; that stretch reads ELDKRKKDIEDGEK. Polar residues predominate over residues 759 to 768; that stretch reads SASQNEYTQR. Residues 957-967 are compositionally biased toward low complexity; the sequence is RTGSTSRSSGG. Polar residues predominate over residues 973-982; it reads GNSSSIQMAM.

This sequence belongs to the protein kinase superfamily. Ser/Thr protein kinase family. STE20 subfamily. Mg(2+) is required as a cofactor. In terms of tissue distribution, expressed in the pharynx, including the pharyngeal muscle of the metacorpus, the isthmus, and the terminal bulb; in the intestine, including the pharyngeointestinal valve between the pharynx and the intestine, a structure near the anus likely to be the anal sphincter and the excretory cell and in several ring neurons.

Its subcellular location is the cytoplasm. It localises to the cytoskeleton. It is found in the cell cortex. It catalyses the reaction L-seryl-[protein] + ATP = O-phospho-L-seryl-[protein] + ADP + H(+). It carries out the reaction L-threonyl-[protein] + ATP = O-phospho-L-threonyl-[protein] + ADP + H(+). Its function is as follows. Acts as a negative regulator of cortical contractions during early embryonic cell division, possibly by regulating rho-1-dependent actomyosin contractility. Plays a role in polarity establishment in early embryos by regulating the size of the anterior and posterior cortex in the first asymmetric cell division. Might play a role in cell cycle progression. In the germline, involved in the regulation of meiotic progression during oogenesis, possibly by modulating the timing of mpk-1 activation. Plays a role in meiotic recombination events. Involved in pharyngeal pumping. This is Serine/threonine-protein kinase SULU (kin-18) from Caenorhabditis elegans.